The chain runs to 469 residues: ATP-dependent protease ATPase subunit HslU (469 aa).

Residues Ile24, 66–71 (GVGKTE), Asp282, Glu347, and Arg419 contribute to the ATP site.

It belongs to the ClpX chaperone family. HslU subfamily. In terms of assembly, a double ring-shaped homohexamer of HslV is capped on each side by a ring-shaped HslU homohexamer. The assembly of the HslU/HslV complex is dependent on binding of ATP.

The protein localises to the cytoplasm. Functionally, ATPase subunit of a proteasome-like degradation complex; this subunit has chaperone activity. The binding of ATP and its subsequent hydrolysis by HslU are essential for unfolding of protein substrates subsequently hydrolyzed by HslV. HslU recognizes the N-terminal part of its protein substrates and unfolds these before they are guided to HslV for hydrolysis. The chain is ATP-dependent protease ATPase subunit HslU from Listeria monocytogenes serotype 4a (strain HCC23).